The following is a 244-amino-acid chain: MFKRGVKIEIIPAIDILGGRCVRLFQGDYAQETVYSSDPVGTAMRWQSLGAPRLHVVDLDGAADGQSVNFELIKEIANSALIPVEVGGGIRSMETVKKLLVAGVDRVILGTAAVENPELVKEICARYADSVAVSIDARNGKVATRGWVTNTEIDALELARSMKKLGIRRFIYTDISRDGTLSEPNFAAIRDLISAINVPVIASGGVSSLSHLRLLKDIGAEGAIVGKAIYTGDLNLKRAFEDLS.

Aspartate 15 functions as the Proton acceptor in the catalytic mechanism. The active-site Proton donor is the aspartate 136.

Belongs to the HisA/HisF family.

It localises to the cytoplasm. It catalyses the reaction 1-(5-phospho-beta-D-ribosyl)-5-[(5-phospho-beta-D-ribosylamino)methylideneamino]imidazole-4-carboxamide = 5-[(5-phospho-1-deoxy-D-ribulos-1-ylimino)methylamino]-1-(5-phospho-beta-D-ribosyl)imidazole-4-carboxamide. Its pathway is amino-acid biosynthesis; L-histidine biosynthesis; L-histidine from 5-phospho-alpha-D-ribose 1-diphosphate: step 4/9. The polypeptide is 1-(5-phosphoribosyl)-5-[(5-phosphoribosylamino)methylideneamino] imidazole-4-carboxamide isomerase (Dehalococcoides mccartyi (strain CBDB1)).